A 281-amino-acid chain; its full sequence is MAQITMSDMLKAGLHFGHQTRRWNPKMKQFILTQRNGIHIINLFKSLDMIDKAYDFIKTTVAHNGTVLFVGTKKQAQEAIANQATRVNMPYVSERWLGGMLTNFQTVSKRVNRLKELEEMDFTDVHGSGLTKKELLLLEREKDKLNKQLGGIRNMNRTPSAMFVVDITKEALAVEEAHKLGIPVVAIVDTNADPDTVEYPIPANDDAIRGIELLTSLMADAVAEGLLERSGANKAEGEAAEQPMAAWEKELLTNEAPAEASAEAAAPAAAEGETAEAPKAE.

Residues 233–281 form a disordered region; the sequence is NKAEGEAAEQPMAAWEKELLTNEAPAEASAEAAAPAAAEGETAEAPKAE. Residues 255–275 show a composition bias toward low complexity; sequence EAPAEASAEAAAPAAAEGETA.

The protein belongs to the universal ribosomal protein uS2 family.

The sequence is that of Small ribosomal subunit protein uS2 from Bifidobacterium longum (strain DJO10A).